Here is a 240-residue protein sequence, read N- to C-terminus: tRNA (guanine-N(1)-)-methyltransferase (240 aa).

Residues G110 and 129 to 134 contribute to the S-adenosyl-L-methionine site; that span reads LGDFVL.

It belongs to the RNA methyltransferase TrmD family. As to quaternary structure, homodimer.

It localises to the cytoplasm. The catalysed reaction is guanosine(37) in tRNA + S-adenosyl-L-methionine = N(1)-methylguanosine(37) in tRNA + S-adenosyl-L-homocysteine + H(+). Functionally, specifically methylates guanosine-37 in various tRNAs. In Clostridium botulinum (strain Loch Maree / Type A3), this protein is tRNA (guanine-N(1)-)-methyltransferase.